We begin with the raw amino-acid sequence, 442 residues long: Coiled-coil domain-containing protein 91 (442 aa).

The GGA1-binding motif stretch occupies residues Met1–Asp16. The tract at residues Met1 to Pro27 is disordered. 2 positions are modified to phosphoserine: Ser43 and Ser46. 2 disordered regions span residues Glu48 to Ser80 and His114 to Gln134. 3 coiled-coil regions span residues Val130–Ala210, His253–Val318, and Ala346–Asp408. Residues Leu211–Arg414 are homodimerization.

Homodimer. Interacts with GGA1, GGA2 and AP1G1.

The protein resides in the membrane. Its subcellular location is the golgi apparatus. It localises to the trans-Golgi network membrane. It is found in the trans-Golgi network. Functionally, involved in the regulation of membrane traffic through the trans-Golgi network (TGN). Functions in close cooperation with the GGAs in the sorting of hydrolases to lysosomes. This Mus musculus (Mouse) protein is Coiled-coil domain-containing protein 91 (Ccdc91).